The chain runs to 826 residues: Leucine--tRNA ligase (826 aa).

Residues 42 to 52 (PYPSGNLHMGH) carry the 'HIGH' region motif. Positions 581 to 585 (KMSKS) match the 'KMSKS' region motif. Lys584 provides a ligand contact to ATP.

Belongs to the class-I aminoacyl-tRNA synthetase family.

The protein localises to the cytoplasm. It carries out the reaction tRNA(Leu) + L-leucine + ATP = L-leucyl-tRNA(Leu) + AMP + diphosphate. In Desulforudis audaxviator (strain MP104C), this protein is Leucine--tRNA ligase.